The chain runs to 331 residues: UPF0194 membrane protein YbhG (331 aa).

Positions 1–19 (MKKPVVIGLAIAAIVAVIA) are cleaved as a signal peptide. Residues 107 to 208 (EEIAQAAAAV…LDLQDTTLIA (102 aa)) adopt a coiled-coil conformation.

It belongs to the UPF0194 family.

Its subcellular location is the periplasm. This chain is UPF0194 membrane protein YbhG, found in Salmonella heidelberg (strain SL476).